We begin with the raw amino-acid sequence, 499 residues long: Lysine--tRNA ligase (499 aa).

E410 and E417 together coordinate Mg(2+).

It belongs to the class-II aminoacyl-tRNA synthetase family. In terms of assembly, homodimer. Mg(2+) serves as cofactor.

It is found in the cytoplasm. It catalyses the reaction tRNA(Lys) + L-lysine + ATP = L-lysyl-tRNA(Lys) + AMP + diphosphate. This chain is Lysine--tRNA ligase (lysS), found in Bacillus subtilis (strain 168).